Consider the following 577-residue polypeptide: Isocitrate dehydrogenase kinase/phosphatase (577 aa).

ATP-binding positions include 324–330 (APGIRGL) and K345. D380 is an active-site residue.

Belongs to the AceK family.

The protein resides in the cytoplasm. It catalyses the reaction L-seryl-[isocitrate dehydrogenase] + ATP = O-phospho-L-seryl-[isocitrate dehydrogenase] + ADP + H(+). Its function is as follows. Bifunctional enzyme which can phosphorylate or dephosphorylate isocitrate dehydrogenase (IDH) on a specific serine residue. This is a regulatory mechanism which enables bacteria to bypass the Krebs cycle via the glyoxylate shunt in response to the source of carbon. When bacteria are grown on glucose, IDH is fully active and unphosphorylated, but when grown on acetate or ethanol, the activity of IDH declines drastically concomitant with its phosphorylation. The polypeptide is Isocitrate dehydrogenase kinase/phosphatase (Pseudoalteromonas atlantica (strain T6c / ATCC BAA-1087)).